Consider the following 645-residue polypeptide: Bifurcating [FeFe] hydrogenase alpha subunit (645 aa).

One can recognise a 2Fe-2S ferredoxin-type domain in the interval 1-76; that stretch reads MKIYVDGREV…GMKVKTNTPE (76 aa). [2Fe-2S] cluster is bound by residues Cys34, Cys45, Cys48, and Cys60. The 40-residue stretch at 76 to 115 folds into the 4Fe-4S His(Cys)3-ligated-type domain; the sequence is EIYEMRRNILELILATHNRDCTTCDRNGSCKLQKYAEDFG. The [4Fe-4S] cluster site is built by His92, Cys96, Cys99, Cys105, Cys143, Cys146, Cys149, Cys153, Cys186, Cys189, Cys192, Cys196, Cys295, Cys350, Cys482, and Cys486. 4Fe-4S ferredoxin-type domains are found at residues 133 to 164 and 178 to 206; these read SAPVVRDTSKCILCGDCVRVCEEIQGVGVIEF and DTPLIETECVLCGQCVAYCPTGALSIRND. Cys486 is a binding site for Fe(2+). [2Fe-2S] cluster contacts are provided by Cys575, Cys580, Cys612, and Cys616.

Heterotrimer composed of HydA (alpha subunit), HydB (beta subunit) and HydC (gamma subunit). Near neutral and acidic pH conditions favor oligomerization of the heterotrimeric holoenzyme. The cofactor is [2Fe-2S] cluster. It depends on [4Fe-4S] cluster as a cofactor. Fe(2+) serves as cofactor.

Its subcellular location is the cytoplasm. The catalysed reaction is 2 H2 + 2 oxidized [2Fe-2S]-[ferredoxin] + NAD(+) = 2 reduced [2Fe-2S]-[ferredoxin] + NADH + 3 H(+). Its function is as follows. Catalyzes the oxidation of the physiological electron carriers NADH and reduced ferredoxin, coupled to the production of H(2). Acts as a bifurcating [FeFe] hydrogenase, which uses the exergonic oxidation of reduced ferredoxin to drive the unfavorable oxidation of NADH to produce H(2). The alpha subunit contains the catalytic H-cluster. This is Bifurcating [FeFe] hydrogenase alpha subunit from Thermotoga maritima (strain ATCC 43589 / DSM 3109 / JCM 10099 / NBRC 100826 / MSB8).